Reading from the N-terminus, the 72-residue chain is Mitochondrial import protein 2 (72 aa).

The disordered stretch occupies residues Met1–Ser22. The Cytoplasmic portion of the chain corresponds to Met1 to Gln34. A helical membrane pass occupies residues Leu35–Gly52. Topologically, residues Arg53 to Asn72 are mitochondrial intermembrane.

Belongs to the MIM2 family. Component of the mitochondrial outer import machinery (MIM) complex containing at least mim1 and mim2. Interacts with mim1. Interacts with mitophagy receptor atg43.

It localises to the mitochondrion outer membrane. Component of the mitochondrial outer import machinery (MIM) complex that mediates transport of proteins into mitochondrial compartments. Promotes the insertion of tom70 into the outer mitochondrial membrane. Promotes the insertion of atg43 into the outer mitochondrial membrane. Involved in import of the subset of proteins with multiple alpha-helical transmembrane segments. The protein is Mitochondrial import protein 2 of Schizosaccharomyces pombe (strain 972 / ATCC 24843) (Fission yeast).